The chain runs to 285 residues: Protein phosphatase 1 regulatory subunit 3B (285 aa).

The PP1-binding motif signature appears at 62 to 65; that stretch reads RVSF. The region spanning 125-233 is the CBM21 domain; sequence RNRLQADHVC…SNRGKNYRII (109 aa). Residue S261 is modified to Phosphoserine.

Interacts with glycogen, PPP1CC catalytic subunit of PP1 and PYGL. Associates with glycogen particles. Forms complexes with debranching enzyme, glycogen phosphorylase, glycogen synthase and phosphorylase kinase which is necessary for its regulation of PP1 activity. Highly expressed in the liver and, at lower levels, in skeletal muscle, including in vastus lateralis, gastrocnemius and soleus (at protein level). Highest mRNA levels are observed in skeletal muscle, and only moderate levels in liver and heart. Weak expression in placenta and lung.

In terms of biological role, acts as a glycogen-targeting subunit for phosphatase PP1. Facilitates interaction of the PP1 with enzymes of the glycogen metabolism and regulates its activity. Suppresses the rate at which PP1 dephosphorylates (inactivates) glycogen phosphorylase and enhances the rate at which it activates glycogen synthase and therefore limits glycogen breakdown. Its activity is inhibited by PYGL, resulting in inhibition of the glycogen synthase and glycogen phosphorylase phosphatase activities of PP1. Dramatically increases basal and insulin-stimulated glycogen synthesis upon overexpression in hepatocytes. The chain is Protein phosphatase 1 regulatory subunit 3B (PPP1R3B) from Homo sapiens (Human).